A 72-amino-acid polypeptide reads, in one-letter code: Large ribosomal subunit protein uL29 (72 aa).

Belongs to the universal ribosomal protein uL29 family.

In Chlamydia trachomatis serovar L2 (strain ATCC VR-902B / DSM 19102 / 434/Bu), this protein is Large ribosomal subunit protein uL29.